The sequence spans 550 residues: Glycosyltransferase-like protein gnt12 (550 aa).

The disordered stretch occupies residues 1-29 (MSYLPLYNNNNNINNNNNNNNNRINNNKE). Over 1-36 (MSYLPLYNNNNNINNNNNNNNNRINNNKEKGVKNKP) the chain is Cytoplasmic. Residues 8–25 (NNNNNINNNNNNNNNRIN) are compositionally biased toward low complexity. The chain crosses the membrane as a helical; Signal-anchor for type II membrane protein span at residues 37-57 (FQIFISIVFIVFLCFFLIWSM). At 58–550 (EAKKDKNIKI…LFNEPLTNEC (493 aa)) the chain is on the extracellular side. The span at 81–97 (LINEPINNNKNNKNNIP) shows a compositional bias: low complexity. A disordered region spans residues 81–100 (LINEPINNNKNNKNNIPKNH). Residues Asn-233, Asn-322, and Asn-426 are each glycosylated (N-linked (GlcNAc...) asparagine).

This sequence belongs to the glycosyltransferase 8 family. Highly divergent.

It localises to the membrane. In Dictyostelium discoideum (Social amoeba), this protein is Glycosyltransferase-like protein gnt12 (gnt12).